The chain runs to 1378 residues: F-box protein At3g54460 (1378 aa).

Basic and acidic residues predominate over residues 65-96 (GDHDVENSGTIEDGRLETPQKRRKCVEGESSG). Residues 65–113 (GDHDVENSGTIEDGRLETPQKRRKCVEGESSGKRKTPKSKRRVLSGSKE) are disordered. The segment covering 97–107 (KRKTPKSKRRV) has biased composition (basic residues). An F-box domain is found at 282 to 328 (VSGVWDLSDDVLISILMKLDTKDLFSIAAVCRLFRSLTSLIVPCMNL). The segment at 571–622 (DVESDIWMQCDSCSKWRRIIDEGVSVTGSAWFCSNNNDPAYQSCNDPEELWD) adopts a CW-type zinc-finger fold. Zn(2+)-binding residues include cysteine 580, cysteine 583, cysteine 603, and cysteine 614. Residues 720–885 (KWFYPKFLEN…LSHIQPLLKF (166 aa)) form the Helicase ATP-binding domain. Position 733 to 740 (733 to 740 (DVPALKVA)) interacts with ATP. Positions 834 to 837 (DEGH) match the DEAH box motif. A Helicase C-terminal domain is found at 1185–1324 (DCGSQMVFVD…DAEKSDRLLS (140 aa)).

Belongs to the helicase family.

This is F-box protein At3g54460 from Arabidopsis thaliana (Mouse-ear cress).